The sequence spans 857 residues: Median body protein (857 aa).

2 coiled-coil regions span residues His-169–Glu-546 and Leu-571–Met-793.

Its subcellular location is the cytoplasm. It localises to the cytoskeleton. Its function is as follows. Structural component of the ventral disk involved in maintanance of a domed conformation of the disk required for proper attachment. May have a role in immobilizing the microtubules between cell divisions. The sequence is that of Median body protein from Giardia intestinalis (strain ATCC 50803 / WB clone C6) (Giardia lamblia).